The primary structure comprises 121 residues: NADH-quinone oxidoreductase subunit A 1 (121 aa).

3 consecutive transmembrane segments (helical) span residues 6-26 (FPIFVVISIAIILAVVLLSIG), 62-82 (LVAMIFIVFDIEVIFMYPWAV), and 90-110 (FYGLIPMVTFVLILLAGYYYI).

It belongs to the complex I subunit 3 family. In terms of assembly, NDH-1 is composed of 14 different subunits. Subunits NuoA, H, J, K, L, M, N constitute the membrane sector of the complex.

The protein resides in the cell inner membrane. It carries out the reaction a quinone + NADH + 5 H(+)(in) = a quinol + NAD(+) + 4 H(+)(out). Functionally, NDH-1 shuttles electrons from NADH, via FMN and iron-sulfur (Fe-S) centers, to quinones in the respiratory chain. The immediate electron acceptor for the enzyme in this species is believed to be a menaquinone. Couples the redox reaction to proton translocation (for every two electrons transferred, four hydrogen ions are translocated across the cytoplasmic membrane), and thus conserves the redox energy in a proton gradient. The polypeptide is NADH-quinone oxidoreductase subunit A 1 (Chloroherpeton thalassium (strain ATCC 35110 / GB-78)).